The primary structure comprises 299 residues: MAEEQAYHVNKGLECIKALRARPLDPLVVEEALAAWVETSEGQTLDRMSSDEAEADHQDISKPCFPAAGPGKSSMSRCHDQGLGGSNSCDEELGAFIGDSSMHSTEVQHYHVYDHSGEKVEGVEDADSILVQSGADDGVEVWGGDEESENSDVDSGEPDPEGSAPADWGSSPISPATRASDVETVEGDEIQKLLEDQSRIRKMTKAGKTLVVPPIPSQERPTASEKPIKKGHRREIDLIWNDGRVFIDRWCNPTCSKVTVGTVRAKCICGECPRVCEQCITDSGIENRIWYHNLADIPE.

Residues 137-160 are compositionally biased toward acidic residues; the sequence is DGVEVWGGDEESENSDVDSGEPDP. Disordered regions lie at residues 137–186 and 205–229; these read DGVE…ETVE and KAGK…KPIK. Positions 232, 251, 255, 267, 269, 272, 276, and 279 each coordinate Zn(2+).

It belongs to the paramyxoviruses V protein family. Interacts with host IFIH1/MDA5 and DHX58/LGP2. Interacts with host TYK2; this interaction inhibits the type I interferon signaling pathway.

It localises to the host cytoplasm. In terms of biological role, plays an essential role in the inhibition of host immune response. Prevents the establishment of cellular antiviral state by blocking interferon-alpha/beta (IFN-alpha/beta) production and signaling pathway. Interacts with host IFIH1/MDA5 and DHX58/LGP2 to inhibit the transduction pathway involved in the activation of IFN-beta promoter, thus protecting the virus against cell antiviral state. Blocks the type I interferon signaling pathway by interacting with host TYK2 and thereby inhibiting downstream STAT1 and STAT2 phosphorylation. The polypeptide is Non-structural protein V (P/V) (Rinderpest virus (strain Kabete O) (RDV)).